The following is a 296-amino-acid chain: Probable lipid kinase YegS-like (296 aa).

One can recognise a DAGKc domain in the interval 1–130 (MPHTLLILNG…IDLAQVNGEH (130 aa)). Residues T37, 63-69 (GDGTINE), and T92 contribute to the ATP site. Residues L212, D215, and L217 each coordinate Mg(2+). E268 acts as the Proton acceptor in catalysis.

Belongs to the diacylglycerol/lipid kinase family. YegS lipid kinase subfamily. Mg(2+) serves as cofactor. The cofactor is Ca(2+).

Its subcellular location is the cytoplasm. Probably phosphorylates lipids; the in vivo substrate is unknown. This is Probable lipid kinase YegS-like from Yersinia pestis bv. Antiqua (strain Angola).